The following is a 110-amino-acid chain: Large ribosomal subunit protein uL22 (110 aa).

This sequence belongs to the universal ribosomal protein uL22 family. As to quaternary structure, part of the 50S ribosomal subunit.

In terms of biological role, this protein binds specifically to 23S rRNA; its binding is stimulated by other ribosomal proteins, e.g. L4, L17, and L20. It is important during the early stages of 50S assembly. It makes multiple contacts with different domains of the 23S rRNA in the assembled 50S subunit and ribosome. Functionally, the globular domain of the protein is located near the polypeptide exit tunnel on the outside of the subunit, while an extended beta-hairpin is found that lines the wall of the exit tunnel in the center of the 70S ribosome. The polypeptide is Large ribosomal subunit protein uL22 (Acinetobacter baumannii (strain ACICU)).